A 77-amino-acid polypeptide reads, in one-letter code: Conotoxin Ar5.1 b (77 aa).

The signal sequence occupies residues 1–19 (MLCLPVFIILLLLASPAAS). Residues 20 to 44 (NPLKTRIQSDLIRAALEDADMKNEK) constitute a propeptide that is removed on maturation.

It belongs to the conotoxin T superfamily. In terms of processing, contains 2 disulfide bonds that can be either 'C1-C3, C2-C4' or 'C1-C4, C2-C3', since these disulfide connectivities have been observed for conotoxins with cysteine framework V (for examples, see AC P0DQQ7 and AC P81755). As to expression, expressed by the venom duct.

The protein localises to the secreted. The sequence is that of Conotoxin Ar5.1 b from Conus arenatus (Sand-dusted cone).